A 353-amino-acid chain; its full sequence is Photosystem II protein D1 (353 aa).

Thr-2 is subject to N-acetylthreonine. Thr-2 bears the Phosphothreonine mark. Helical transmembrane passes span 29–46, 118–133, and 142–156; these read YIGWFGVLMIPTLLTATS, HFLLGVACYMGREWEL, and WIAVAYSAPVAAATA. Residue His-118 participates in chlorophyll a binding. A pheophytin a-binding site is contributed by Tyr-126. [CaMn4O5] cluster-binding residues include Asp-170 and Glu-189. The helical transmembrane segment at 197-218 threads the bilayer; sequence FHMLGVAGVFGGSLFSAMHGSL. His-198 lines the chlorophyll a pocket. A quinone is bound by residues His-215 and 264 to 265; that span reads SF. His-215 lines the Fe cation pocket. His-272 lines the Fe cation pocket. A helical membrane pass occupies residues 274 to 288; it reads FLAAWPVVGIWFTAL. [CaMn4O5] cluster-binding residues include His-332, Glu-333, Asp-342, and Ala-344. Positions 345 to 353 are excised as a propeptide; that stretch reads AIEAPATNG.

Belongs to the reaction center PufL/M/PsbA/D family. In terms of assembly, PSII is composed of 1 copy each of membrane proteins PsbA, PsbB, PsbC, PsbD, PsbE, PsbF, PsbH, PsbI, PsbJ, PsbK, PsbL, PsbM, PsbT, PsbX, PsbY, PsbZ, Psb30/Ycf12, at least 3 peripheral proteins of the oxygen-evolving complex and a large number of cofactors. It forms dimeric complexes. It depends on The D1/D2 heterodimer binds P680, chlorophylls that are the primary electron donor of PSII, and subsequent electron acceptors. It shares a non-heme iron and each subunit binds pheophytin, quinone, additional chlorophylls, carotenoids and lipids. D1 provides most of the ligands for the Mn4-Ca-O5 cluster of the oxygen-evolving complex (OEC). There is also a Cl(-1) ion associated with D1 and D2, which is required for oxygen evolution. The PSII complex binds additional chlorophylls, carotenoids and specific lipids. as a cofactor. Tyr-161 forms a radical intermediate that is referred to as redox-active TyrZ, YZ or Y-Z. Post-translationally, C-terminally processed by CTPA; processing is essential to allow assembly of the oxygen-evolving complex and thus photosynthetic growth.

Its subcellular location is the plastid membrane. It catalyses the reaction 2 a plastoquinone + 4 hnu + 2 H2O = 2 a plastoquinol + O2. Photosystem II (PSII) is a light-driven water:plastoquinone oxidoreductase that uses light energy to abstract electrons from H(2)O, generating O(2) and a proton gradient subsequently used for ATP formation. It consists of a core antenna complex that captures photons, and an electron transfer chain that converts photonic excitation into a charge separation. The D1/D2 (PsbA/PsbD) reaction center heterodimer binds P680, the primary electron donor of PSII as well as several subsequent electron acceptors. In Cuscuta reflexa (Southern Asian dodder), this protein is Photosystem II protein D1.